Reading from the N-terminus, the 1072-residue chain is DNA-directed RNA polymerase subunit beta (1072 aa).

It belongs to the RNA polymerase beta chain family. As to quaternary structure, in plastids the minimal PEP RNA polymerase catalytic core is composed of four subunits: alpha, beta, beta', and beta''. When a (nuclear-encoded) sigma factor is associated with the core the holoenzyme is formed, which can initiate transcription.

It is found in the plastid. Its subcellular location is the chloroplast. It catalyses the reaction RNA(n) + a ribonucleoside 5'-triphosphate = RNA(n+1) + diphosphate. DNA-dependent RNA polymerase catalyzes the transcription of DNA into RNA using the four ribonucleoside triphosphates as substrates. The chain is DNA-directed RNA polymerase subunit beta from Arabis hirsuta (Hairy rock-cress).